Here is a 574-residue protein sequence, read N- to C-terminus: Probable amino-acid permease meu22 (574 aa).

9 helical membrane-spanning segments follow: residues 69–89 (MIAIGGCVGTGLFVGSGNALA), 94–114 (ASILIAFAVIGTYVLFTTSAL), 173–193 (GPVSIWISVFYVIIIAINIWG), 202–222 (FFLSIMKVISVIGFVILSIII), 291–311 (IFWRIFLFYIVALFMLTLVVP), 391–411 (PIYAIAVTLLFGSIAYFTEAG), 412–432 (VGGALFGWLLSICGLSTTFIW), 470–490 (GVAMTILALIAQFYVAVFPIG), and 498–518 (FFQAYMAAPILIISFVAWKFF).

Belongs to the amino acid-polyamine-organocation (APC) superfamily.

Its subcellular location is the membrane. This is Probable amino-acid permease meu22 (meu22) from Schizosaccharomyces pombe (strain 972 / ATCC 24843) (Fission yeast).